The primary structure comprises 68 residues: ATP synthase F(0) complex subunit 8 (68 aa).

A helical membrane pass occupies residues 8–24 (TWLITILSMILTLLIVF). K54 carries the post-translational modification N6-acetyllysine; alternate. Position 54 is an N6-succinyllysine; alternate (K54). Residue K57 is modified to N6-acetyllysine.

Belongs to the ATPase protein 8 family. In terms of assembly, component of the ATP synthase complex composed at least of ATP5F1A/subunit alpha, ATP5F1B/subunit beta, ATP5MC1/subunit c (homooctomer), MT-ATP6/subunit a, MT-ATP8/subunit 8, ATP5ME/subunit e, ATP5MF/subunit f, ATP5MG/subunit g, ATP5MK/subunit k, ATP5MJ/subunit j, ATP5F1C/subunit gamma, ATP5F1D/subunit delta, ATP5F1E/subunit epsilon, ATP5PF/subunit F6, ATP5PB/subunit b, ATP5PD/subunit d, ATP5PO/subunit OSCP. ATP synthase complex consists of a soluble F(1) head domain (subunits alpha(3) and beta(3)) - the catalytic core - and a membrane F(0) domain - the membrane proton channel (subunits c, a, 8, e, f, g, k and j). These two domains are linked by a central stalk (subunits gamma, delta, and epsilon) rotating inside the F1 region and a stationary peripheral stalk (subunits F6, b, d, and OSCP). Interacts with PRICKLE3.

The protein resides in the mitochondrion membrane. Its function is as follows. Subunit 8, of the mitochondrial membrane ATP synthase complex (F(1)F(0) ATP synthase or Complex V) that produces ATP from ADP in the presence of a proton gradient across the membrane which is generated by electron transport complexes of the respiratory chain. ATP synthase complex consist of a soluble F(1) head domain - the catalytic core - and a membrane F(1) domain - the membrane proton channel. These two domains are linked by a central stalk rotating inside the F(1) region and a stationary peripheral stalk. During catalysis, ATP synthesis in the catalytic domain of F(1) is coupled via a rotary mechanism of the central stalk subunits to proton translocation. In vivo, can only synthesize ATP although its ATP hydrolase activity can be activated artificially in vitro. Part of the complex F(0) domain. The protein is ATP synthase F(0) complex subunit 8 of Lemur catta (Ring-tailed lemur).